The primary structure comprises 179 residues: MYEYLDRRYALALYEVAEENNKVDEYLRDLKEVVNIIKNSEDICKILKHPEINTSRKKEIFTELFKDKVDDKILSFLLVLIEKDRILYLEEKLKEMEKIYLEKNNMISANVKTVIPLLKEEREELIEKLGNKYNKKIILEEEIDKSIIGGVYVRVGDDVLDGTLSTRLKDIKKMMLKRE.

This sequence belongs to the ATPase delta chain family. As to quaternary structure, F-type ATPases have 2 components, F(1) - the catalytic core - and F(0) - the membrane proton channel. F(1) has five subunits: alpha(3), beta(3), gamma(1), delta(1), epsilon(1). F(0) has three main subunits: a(1), b(2) and c(10-14). The alpha and beta chains form an alternating ring which encloses part of the gamma chain. F(1) is attached to F(0) by a central stalk formed by the gamma and epsilon chains, while a peripheral stalk is formed by the delta and b chains.

The protein localises to the cell membrane. F(1)F(0) ATP synthase produces ATP from ADP in the presence of a proton or sodium gradient. F-type ATPases consist of two structural domains, F(1) containing the extramembraneous catalytic core and F(0) containing the membrane proton channel, linked together by a central stalk and a peripheral stalk. During catalysis, ATP synthesis in the catalytic domain of F(1) is coupled via a rotary mechanism of the central stalk subunits to proton translocation. In terms of biological role, this protein is part of the stalk that links CF(0) to CF(1). It either transmits conformational changes from CF(0) to CF(1) or is implicated in proton conduction. The polypeptide is ATP synthase subunit delta (Clostridium botulinum (strain Langeland / NCTC 10281 / Type F)).